A 78-amino-acid polypeptide reads, in one-letter code: ATP synthase subunit c (78 aa).

A run of 2 helical transmembrane segments spans residues 16-36 (LATL…ASFL) and 57-77 (MALA…ILFV).

This sequence belongs to the ATPase C chain family. F-type ATPases have 2 components, F(1) - the catalytic core - and F(0) - the membrane proton channel. F(1) has five subunits: alpha(3), beta(3), gamma(1), delta(1), epsilon(1). F(0) has three main subunits: a(1), b(2) and c(10-14). The alpha and beta chains form an alternating ring which encloses part of the gamma chain. F(1) is attached to F(0) by a central stalk formed by the gamma and epsilon chains, while a peripheral stalk is formed by the delta and b chains.

It is found in the cell inner membrane. Functionally, f(1)F(0) ATP synthase produces ATP from ADP in the presence of a proton or sodium gradient. F-type ATPases consist of two structural domains, F(1) containing the extramembraneous catalytic core and F(0) containing the membrane proton channel, linked together by a central stalk and a peripheral stalk. During catalysis, ATP synthesis in the catalytic domain of F(1) is coupled via a rotary mechanism of the central stalk subunits to proton translocation. Its function is as follows. Key component of the F(0) channel; it plays a direct role in translocation across the membrane. A homomeric c-ring of between 10-14 subunits forms the central stalk rotor element with the F(1) delta and epsilon subunits. This is ATP synthase subunit c from Hyphomonas neptunium (strain ATCC 15444).